The sequence spans 778 residues: Phenylalanine--tRNA ligase beta subunit (778 aa).

Positions 39 to 150 constitute a tRNA-binding domain; it reads YEVPQKIVFG…GKYKIGEEVS (112 aa). The B5 domain maps to 391–467; that stretch reads HEDKIISLNK…RLVGIDNIPS (77 aa). 4 residues coordinate Mg(2+): D445, D451, E454, and E455. An FDX-ACB domain is found at 686–778; sequence SKYQASFRDL…LKNQLGVGIR (93 aa).

The protein belongs to the phenylalanyl-tRNA synthetase beta subunit family. Type 1 subfamily. As to quaternary structure, tetramer of two alpha and two beta subunits. The cofactor is Mg(2+).

The protein resides in the cytoplasm. The enzyme catalyses tRNA(Phe) + L-phenylalanine + ATP = L-phenylalanyl-tRNA(Phe) + AMP + diphosphate + H(+). This is Phenylalanine--tRNA ligase beta subunit from Sulfurimonas denitrificans (strain ATCC 33889 / DSM 1251) (Thiomicrospira denitrificans (strain ATCC 33889 / DSM 1251)).